The following is a 344-amino-acid chain: Nuclear distribution protein nudE-like 1-B (344 aa).

The stretch at 13–190 forms a coiled coil; it reads KEEIVYWREL…LAVRERQTDG (178 aa). Disordered stretches follow at residues 186–209 and 325–344; these read RQTDGIRKSAPSSPTLDCEKTDSS and PPGVLGSRPPSPPGLLPLSV. Residues 333 to 344 show a composition bias toward pro residues; it reads PPSPPGLLPLSV.

This sequence belongs to the nudE family. In terms of processing, phosphorylated in mitosis.

The protein resides in the cytoplasm. It localises to the cytoskeleton. It is found in the microtubule organizing center. Its subcellular location is the centrosome. The protein localises to the spindle. In terms of biological role, required for organization of the cellular microtubule array and microtubule anchoring at the centrosome. Positively regulates the activity of the minus-end directed microtubule motor protein dynein. May enhance dynein-mediated microtubule sliding by targeting dynein to the microtubule plus end. Positively regulates lysosome peripheral distribution and ruffled border formation in osteoclasts. The protein is Nuclear distribution protein nudE-like 1-B (ndel1-b) of Xenopus laevis (African clawed frog).